The following is a 335-amino-acid chain: Methionine aminopeptidase 1D, mitochondrial (335 aa).

Residues 1–19 constitute a mitochondrion transit peptide; sequence MAAPSGVHLLVRRGSHRIF. H161 provides a ligand contact to substrate. Residues D178, D189, and H252 each coordinate a divalent metal cation. H259 contacts substrate. A divalent metal cation-binding residues include E284 and E315.

The protein belongs to the peptidase M24A family. Methionine aminopeptidase type 1 subfamily. Requires Co(2+) as cofactor. The cofactor is Zn(2+). It depends on Mn(2+) as a cofactor. Fe(2+) is required as a cofactor. In terms of tissue distribution, overexpressed in colon cancer cell lines and colon tumors as compared to normal tissues (at protein level).

Its subcellular location is the mitochondrion. It catalyses the reaction Release of N-terminal amino acids, preferentially methionine, from peptides and arylamides.. Its function is as follows. Removes the N-terminal methionine from nascent proteins. The N-terminal methionine is often cleaved when the second residue in the primary sequence is small and uncharged (Met-Ala-, Cys, Gly, Pro, Ser, Thr, or Val). Requires deformylation of the N(alpha)-formylated initiator methionine before it can be hydrolyzed. May play a role in colon tumorigenesis. The polypeptide is Methionine aminopeptidase 1D, mitochondrial (METAP1D) (Homo sapiens (Human)).